The chain runs to 389 residues: SH3 and F-BAR domain-containing protein DDB_G0274695 (389 aa).

In terms of domain architecture, F-BAR spans 3–258 (EQFKDNFWGP…VITQIDKLED (256 aa)). Positions 119 to 192 (KLNKERKDME…QDYRDSVNKL (74 aa)) form a coiled coil. Residues 300–328 (LTSSVSSNSLTSSYNSATTTPTPAPRSTP) show a composition bias toward low complexity. Residues 300-329 (LTSSVSSNSLTSSYNSATTTPTPAPRSTPI) are disordered. In terms of domain architecture, SH3 spans 332 to 389 (SKKKQAKALYDYVGSDATELDFFAGDIITILDEDESGWFRGELGDRIGLYPSNYCEPI).

In Dictyostelium discoideum (Social amoeba), this protein is SH3 and F-BAR domain-containing protein DDB_G0274695.